A 266-amino-acid chain; its full sequence is Glucosamine-6-phosphate deaminase (266 aa).

Residue Asp67 is the Proton acceptor; for enolization step of the active site. Asn139 serves as the catalytic For ring-opening step. The active-site Proton acceptor; for ring-opening step is the His141. The active-site For ring-opening step is the Glu146.

The protein belongs to the glucosamine/galactosamine-6-phosphate isomerase family. NagB subfamily. In terms of assembly, homohexamer.

It carries out the reaction alpha-D-glucosamine 6-phosphate + H2O = beta-D-fructose 6-phosphate + NH4(+). The protein operates within amino-sugar metabolism; N-acetylneuraminate degradation; D-fructose 6-phosphate from N-acetylneuraminate: step 5/5. Its function is as follows. Catalyzes the reversible isomerization-deamination of glucosamine 6-phosphate (GlcN6P) to form fructose 6-phosphate (Fru6P) and ammonium ion. The protein is Glucosamine-6-phosphate deaminase of Marinomonas sp. (strain MWYL1).